Here is a 93-residue protein sequence, read N- to C-terminus: DNA/RNA-binding protein Alba (93 aa).

K11 is modified (N6-acetyllysine).

It belongs to the histone-like Alba family. Acetylated. Acetylation at Lys-11 decreases DNA-binding affinity.

The protein localises to the cytoplasm. The protein resides in the chromosome. Binds double-stranded DNA tightly but without sequence specificity. Involved in DNA compaction. This is DNA/RNA-binding protein Alba from Pyrococcus horikoshii (strain ATCC 700860 / DSM 12428 / JCM 9974 / NBRC 100139 / OT-3).